Consider the following 301-residue polypeptide: Homoserine kinase (301 aa).

An ATP-binding site is contributed by 89–99; sequence KPGSGLGSSSA.

Belongs to the GHMP kinase family. Homoserine kinase subfamily.

The protein resides in the cytoplasm. The enzyme catalyses L-homoserine + ATP = O-phospho-L-homoserine + ADP + H(+). The protein operates within amino-acid biosynthesis; L-threonine biosynthesis; L-threonine from L-aspartate: step 4/5. Catalyzes the ATP-dependent phosphorylation of L-homoserine to L-homoserine phosphate. This Methanococcus maripaludis (strain DSM 14266 / JCM 13030 / NBRC 101832 / S2 / LL) protein is Homoserine kinase.